The following is a 219-amino-acid chain: UPF0502 protein Gura_0277 (219 aa).

The protein belongs to the UPF0502 family.

This Geotalea uraniireducens (strain Rf4) (Geobacter uraniireducens) protein is UPF0502 protein Gura_0277.